The primary structure comprises 78 residues: Large ribosomal subunit protein bL28 (78 aa).

The protein belongs to the bacterial ribosomal protein bL28 family.

This chain is Large ribosomal subunit protein bL28, found in Prochlorococcus marinus (strain MIT 9301).